The primary structure comprises 447 residues: Tubulin beta chain (447 aa).

GTP is bound by residues glutamine 11, glutamate 69, serine 138, glycine 142, threonine 143, glycine 144, asparagine 204, and asparagine 226. Glutamate 69 lines the Mg(2+) pocket.

It belongs to the tubulin family. As to quaternary structure, dimer of alpha and beta chains. A typical microtubule is a hollow water-filled tube with an outer diameter of 25 nm and an inner diameter of 15 nM. Alpha-beta heterodimers associate head-to-tail to form protofilaments running lengthwise along the microtubule wall with the beta-tubulin subunit facing the microtubule plus end conferring a structural polarity. Microtubules usually have 13 protofilaments but different protofilament numbers can be found in some organisms and specialized cells. Requires Mg(2+) as cofactor.

It is found in the cytoplasm. The protein resides in the cytoskeleton. Its function is as follows. Tubulin is the major constituent of microtubules, a cylinder consisting of laterally associated linear protofilaments composed of alpha- and beta-tubulin heterodimers. Microtubules grow by the addition of GTP-tubulin dimers to the microtubule end, where a stabilizing cap forms. Below the cap, tubulin dimers are in GDP-bound state, owing to GTPase activity of alpha-tubulin. The polypeptide is Tubulin beta chain (TUB2) (Penicillium digitatum (Green mold)).